We begin with the raw amino-acid sequence, 105 residues long: Resistin-like beta (105 aa).

The N-terminal stretch at 1 to 23 (MKPTLCFLFILVSLFPLIVPGNA) is a signal peptide. 5 disulfides stabilise this stretch: C49–C102, C61–C101, C70–C87, C72–C89, and C76–C91.

The protein belongs to the resistin/FIZZ family. In terms of assembly, homodimer; disulfide-linked. Heterodimer with RETNLG. Strongly expressed in colon, and at lower levels in ileum. In colon, found throughout the crypt and surface epithelium and in goblet cells (at protein level). Specific to the gastrointestinal tract; not detected in other tissues tested.

It localises to the secreted. Probable hormone. This Mus musculus (Mouse) protein is Resistin-like beta (Retnlb).